Here is a 126-residue protein sequence, read N- to C-terminus: Probable DNA-directed RNA polymerase II subunit RPB11 (126 aa).

The protein belongs to the archaeal Rpo11/eukaryotic RPB11/RPC19 RNA polymerase subunit family. As to quaternary structure, component of the RNA polymerase II (Pol II) complex consisting of 12 subunits.

Its subcellular location is the nucleus. In terms of biological role, DNA-dependent RNA polymerase catalyzes the transcription of DNA into RNA using the four ribonucleoside triphosphates as substrates. Component of RNA polymerase II which synthesizes mRNA precursors and many functional non-coding RNAs. Pol II is the central component of the basal RNA polymerase II transcription machinery. It is composed of mobile elements that move relative to each other. RPB11 is part of the core element with the central large cleft. This chain is Probable DNA-directed RNA polymerase II subunit RPB11, found in Plasmodium falciparum (isolate 3D7).